The sequence spans 189 residues: Thermostable direct hemolysin (189 aa).

Residues 1–24 form the signal peptide; it reads MKYQYFAKKSFLFISMLAAFKTFA. Cysteines 175 and 185 form a disulfide.

This sequence belongs to the TDH hemolysin family. In terms of assembly, homodimer.

Functionally, bacterial hemolysins are exotoxins that attack blood cell membranes and cause cell rupture by mechanisms not clearly defined. The chain is Thermostable direct hemolysin (tdh) from Vibrio mimicus.